The following is a 261-amino-acid chain: Maspardin (261 aa).

Residues 87–159 (FCDGFRKLLD…NSFWLMPAFM (73 aa)) form the AB hydrolase-1 domain. Ser-257 carries the phosphoserine modification.

This sequence belongs to the AB hydrolase superfamily. Interacts with CD4. Interacts with ALDH16A1.

It is found in the cytoplasm. Its function is as follows. May play a role as a negative regulatory factor in CD4-dependent T-cell activation. This chain is Maspardin (Spg21), found in Rattus norvegicus (Rat).